Consider the following 313-residue polypeptide: Fructose-1,6-bisphosphatase class 1 (313 aa).

Residues Glu-91, Asp-112, Leu-114, and Asp-115 each contribute to the Mg(2+) site. Substrate is bound by residues 115-118 (DGSS), Tyr-223, and Lys-254. Glu-260 serves as a coordination point for Mg(2+).

This sequence belongs to the FBPase class 1 family. As to quaternary structure, homotetramer. Mg(2+) is required as a cofactor.

Its subcellular location is the cytoplasm. It catalyses the reaction beta-D-fructose 1,6-bisphosphate + H2O = beta-D-fructose 6-phosphate + phosphate. The protein operates within carbohydrate biosynthesis; gluconeogenesis. The chain is Fructose-1,6-bisphosphatase class 1 from Geobacter sulfurreducens (strain ATCC 51573 / DSM 12127 / PCA).